A 561-amino-acid polypeptide reads, in one-letter code: Ribulokinase (561 aa).

This sequence belongs to the ribulokinase family.

It carries out the reaction D-ribulose + ATP = D-ribulose 5-phosphate + ADP + H(+). The enzyme catalyses L-ribulose + ATP = L-ribulose 5-phosphate + ADP + H(+). The protein operates within carbohydrate degradation; L-arabinose degradation via L-ribulose; D-xylulose 5-phosphate from L-arabinose (bacterial route): step 2/3. In Shouchella clausii (strain KSM-K16) (Alkalihalobacillus clausii), this protein is Ribulokinase.